A 72-amino-acid chain; its full sequence is Large ribosomal subunit protein bL31 (72 aa).

Positions 16, 18, 36, and 39 each coordinate Zn(2+).

Belongs to the bacterial ribosomal protein bL31 family. Type A subfamily. In terms of assembly, part of the 50S ribosomal subunit. Zn(2+) serves as cofactor.

Functionally, binds the 23S rRNA. This chain is Large ribosomal subunit protein bL31, found in Geobacter sp. (strain M21).